Consider the following 273-residue polypeptide: ATP synthase subunit delta (273 aa).

The segment at T55–A78 is disordered. Low complexity predominate over residues P57–A78.

It belongs to the ATPase delta chain family. As to quaternary structure, F-type ATPases have 2 components, F(1) - the catalytic core - and F(0) - the membrane proton channel. F(1) has five subunits: alpha(3), beta(3), gamma(1), delta(1), epsilon(1). F(0) has three main subunits: a(1), b(2) and c(10-14). The alpha and beta chains form an alternating ring which encloses part of the gamma chain. F(1) is attached to F(0) by a central stalk formed by the gamma and epsilon chains, while a peripheral stalk is formed by the delta and b chains.

The protein resides in the cell membrane. Functionally, f(1)F(0) ATP synthase produces ATP from ADP in the presence of a proton or sodium gradient. F-type ATPases consist of two structural domains, F(1) containing the extramembraneous catalytic core and F(0) containing the membrane proton channel, linked together by a central stalk and a peripheral stalk. During catalysis, ATP synthesis in the catalytic domain of F(1) is coupled via a rotary mechanism of the central stalk subunits to proton translocation. In terms of biological role, this protein is part of the stalk that links CF(0) to CF(1). It either transmits conformational changes from CF(0) to CF(1) or is implicated in proton conduction. This chain is ATP synthase subunit delta, found in Streptomyces lividans.